The sequence spans 129 residues: Glycine cleavage system H protein (129 aa).

One can recognise a Lipoyl-binding domain in the interval 24-106; the sequence is TYTVGITEHA…YGQGWIFKIK (83 aa). At lysine 65 the chain carries N6-lipoyllysine.

The protein belongs to the GcvH family. As to quaternary structure, the glycine cleavage system is composed of four proteins: P, T, L and H. It depends on (R)-lipoate as a cofactor.

Functionally, the glycine cleavage system catalyzes the degradation of glycine. The H protein shuttles the methylamine group of glycine from the P protein to the T protein. The protein is Glycine cleavage system H protein of Cronobacter sakazakii (strain ATCC BAA-894) (Enterobacter sakazakii).